The primary structure comprises 205 residues: Beta-crystallin B2 (205 aa).

The residue at position 2 (A2) is an N-acetylalanine. The interval 2–16 (ASDHQTQAGKPQPLN) is N-terminal arm. Beta/gamma crystallin 'Greek key' domains lie at 17 to 56 (PKII…LVQA) and 57 to 101 (GPWV…RPIK). Residues 102 to 106 (VDSQE) form a connecting peptide region. 2 Beta/gamma crystallin 'Greek key' domains span residues 107-148 (HKII…RVQS) and 149-191 (GTWV…RRIR). Residues 193-205 (MQWHQRGAFHPTN) form a C-terminal arm region.

It belongs to the beta/gamma-crystallin family. As to quaternary structure, homo/heterodimer, or complexes of higher-order. The structure of beta-crystallin oligomers seems to be stabilized through interactions between the N-terminal arms.

Functionally, crystallins are the dominant structural components of the vertebrate eye lens. This chain is Beta-crystallin B2 (CRYBB2), found in Oryctolagus cuniculus (Rabbit).